The sequence spans 366 residues: UDP-N-acetylglucosamine--N-acetylmuramyl-(pentapeptide) pyrophosphoryl-undecaprenol N-acetylglucosamine transferase (366 aa).

UDP-N-acetyl-alpha-D-glucosamine is bound by residues 14 to 16, asparagine 128, arginine 169, serine 201, isoleucine 251, and glutamine 296; that span reads TGG.

This sequence belongs to the glycosyltransferase 28 family. MurG subfamily.

The protein localises to the cell inner membrane. It catalyses the reaction di-trans,octa-cis-undecaprenyl diphospho-N-acetyl-alpha-D-muramoyl-L-alanyl-D-glutamyl-meso-2,6-diaminopimeloyl-D-alanyl-D-alanine + UDP-N-acetyl-alpha-D-glucosamine = di-trans,octa-cis-undecaprenyl diphospho-[N-acetyl-alpha-D-glucosaminyl-(1-&gt;4)]-N-acetyl-alpha-D-muramoyl-L-alanyl-D-glutamyl-meso-2,6-diaminopimeloyl-D-alanyl-D-alanine + UDP + H(+). Its pathway is cell wall biogenesis; peptidoglycan biosynthesis. Cell wall formation. Catalyzes the transfer of a GlcNAc subunit on undecaprenyl-pyrophosphoryl-MurNAc-pentapeptide (lipid intermediate I) to form undecaprenyl-pyrophosphoryl-MurNAc-(pentapeptide)GlcNAc (lipid intermediate II). The polypeptide is UDP-N-acetylglucosamine--N-acetylmuramyl-(pentapeptide) pyrophosphoryl-undecaprenol N-acetylglucosamine transferase (Christiangramia forsetii (strain DSM 17595 / CGMCC 1.15422 / KT0803) (Gramella forsetii)).